We begin with the raw amino-acid sequence, 222 residues long: ATP-dependent dethiobiotin synthetase BioD (222 aa).

12–17 (DVGKTI) serves as a coordination point for ATP. T16 serves as a coordination point for Mg(2+). Residue K37 is part of the active site. Position 41 (T41) interacts with substrate. ATP-binding positions include D49, 107-110 (EGAG), 167-168 (GS), and 197-199 (AEG). 2 residues coordinate Mg(2+): D49 and E107.

The protein belongs to the dethiobiotin synthetase family. As to quaternary structure, homodimer. The cofactor is Mg(2+).

It localises to the cytoplasm. It carries out the reaction (7R,8S)-7,8-diammoniononanoate + CO2 + ATP = (4R,5S)-dethiobiotin + ADP + phosphate + 3 H(+). The protein operates within cofactor biosynthesis; biotin biosynthesis; biotin from 7,8-diaminononanoate: step 1/2. Functionally, catalyzes a mechanistically unusual reaction, the ATP-dependent insertion of CO2 between the N7 and N8 nitrogen atoms of 7,8-diaminopelargonic acid (DAPA, also called 7,8-diammoniononanoate) to form a ureido ring. In Corynebacterium diphtheriae (strain ATCC 700971 / NCTC 13129 / Biotype gravis), this protein is ATP-dependent dethiobiotin synthetase BioD.